We begin with the raw amino-acid sequence, 150 residues long: MSTLEQKLTEMITAPVEALGFELVGIEFIRGRTSTLRIYIDSEDGINVDDCADVSHQVSAVLDVEDPITVAYNLEVSSPGLDRPLFTAEHYARFVGEEVTLVLRMAVQNRRKWQGVIKAVDGEMITVTVEGKDEVFALSNIQKANLVPHF.

The protein belongs to the RimP family.

The protein localises to the cytoplasm. Required for maturation of 30S ribosomal subunits. The chain is Ribosome maturation factor RimP from Escherichia coli O9:H4 (strain HS).